Here is a 386-residue protein sequence, read N- to C-terminus: Indole-3-acetate O-methyltransferase 1 (386 aa).

Tyr-30 lines the S-adenosyl-L-methionine pocket. Substrate is bound by residues Tyr-30 and 33-37 (NSQAQ). Residues Gly-72, 72-73 (GC), Asn-78, 108-111 (FSDL), Asp-110, 152-154 (SFY), and 169-171 (AFS) each bind S-adenosyl-L-methionine. Substrate is bound at residue 170 to 174 (FSLHW). Asn-191, Val-195, Arg-277, Asp-278, Phe-280, and Asn-281 together coordinate Mg(2+). Residue Ser-334 participates in substrate binding.

This sequence belongs to the methyltransferase superfamily. SABATH family. As to quaternary structure, homodimer. Requires Mg(2+) as cofactor. In terms of tissue distribution, expressed in seedling roots and leaves. Expressed in the stigma, funiculus, and vascular bundles in sepals, petals and stamens.

It catalyses the reaction (indol-3-yl)acetate + S-adenosyl-L-methionine = methyl (indol-3-yl)acetate + S-adenosyl-L-homocysteine. In terms of biological role, catalyzes the methylation of the free carboxyl end of the plant hormone indole-3-acetic acid (IAA). Converts IAA to IAA methyl ester (MeIAA). Regulates IAA activities by IAA methylation. Methylation of IAA plays an important role in regulating plant development and auxin homeostasis. Required for correct leaf pattern formation. MeIAA seems to be an inactive form of IAA. The chain is Indole-3-acetate O-methyltransferase 1 (IAMT1) from Arabidopsis thaliana (Mouse-ear cress).